Reading from the N-terminus, the 896-residue chain is Protein bride of sevenless (896 aa).

The N-terminal stretch at M1–E31 is a signal peptide. The Extracellular segment spans residues C32–W530. Residues T38–V84 form a disordered region. A compositionally biased stretch (polar residues) spans P52 to I64. Low complexity predominate over residues T65–V84. N-linked (GlcNAc...) asparagine glycosylation is found at N183, N307, N474, and N485. 7 helical membrane passes run V531–V554, I570–I588, V615–A637, A655–M676, W693–I712, I728–F748, and L759–V781. Over R782 to F896 the chain is Cytoplasmic. Disordered stretches follow at residues S825–G844 and A861–F896. Over residues Q874–L884 the composition is skewed to low complexity.

Belongs to the G-protein coupled receptor 3 family. Expressed exclusively by R8 photoreceptor cells and is internalized in a sev-dependent manner by R7 cells.

It is found in the cell membrane. In terms of biological role, acts as a ligand for sevenless tyrosine-kinase receptor during eye development. In Drosophila melanogaster (Fruit fly), this protein is Protein bride of sevenless (boss).